The sequence spans 197 residues: Putative WUSCHEL-related homeobox 10 (197 aa).

A DNA-binding region (homeobox; WUS-type) is located at residues 75–139; sequence STRPRWTPTT…NRRARSKRKQ (65 aa). Residues 132 to 168 form a disordered region; sequence RARSKRKQPPTTTITSSQADDAAVTTTEERGRCGDDS. Over residues 140–150 the composition is skewed to polar residues; sequence PPTTTITSSQA.

It belongs to the WUS homeobox family.

It localises to the nucleus. Functionally, potential transcription factor that plays a central role during developmental processes. This chain is Putative WUSCHEL-related homeobox 10 (WOX10), found in Arabidopsis thaliana (Mouse-ear cress).